The sequence spans 150 residues: Protein A151R (150 aa).

The protein belongs to the asfivirus A151R family. In terms of assembly, monomer. Homodimer. Interacts with protein B119L. Interacts with membrane protein E248R. The cofactor is Zn(2+).

Its function is as follows. May participate in a redox cascade for the formation of disulfide bonds in viral proteins. This chain is Protein A151R, found in African swine fever virus (isolate Pig/Kenya/KEN-50/1950) (ASFV).